The following is a 1567-amino-acid chain: Putative DEAH-box ATP-dependent helicase UM11114 (1567 aa).

2 disordered regions span residues 1 to 95 (MAPR…PGSK) and 670 to 734 (ESSV…ETRR). Over residues 10-20 (IKSSGTTSSKA) the composition is skewed to polar residues. 2 stretches are compositionally biased toward low complexity: residues 39-48 (TKAAKQQQTQ) and 55-73 (AISA…AASS). Positions 74-83 (AGGGGGGGQG) are enriched in gly residues. Composition is skewed to polar residues over residues 670–687 (ESSV…TPTG) and 713–726 (LQRQ…SPSY). The Helicase ATP-binding domain occupies 746–924 (LGLIRSNRVV…FGKAPCISIP (179 aa)). 759 to 766 (GETGCGKT) lines the ATP pocket. The DEAH box motif lies at 871-874 (DEVH). Positions 1003-1184 (VVRYVVERAE…SLFLEVKSMR (182 aa)) constitute a Helicase C-terminal domain.

It belongs to the DEAD box helicase family. DEAH subfamily.

This chain is Putative DEAH-box ATP-dependent helicase UM11114, found in Mycosarcoma maydis (Corn smut fungus).